A 472-amino-acid chain; its full sequence is Trigger factor (472 aa).

The PPIase FKBP-type domain occupies 174–261 (GDIALVSFKG…LEDLKIKELP (88 aa)). The disordered stretch occupies residues 438–472 (EKTPEKARDQIKEKSSKKKTTKTNKEKKSSKTPKS). Positions 439-451 (KTPEKARDQIKEK) are enriched in basic and acidic residues.

The protein belongs to the FKBP-type PPIase family. Tig subfamily.

It is found in the cytoplasm. The enzyme catalyses [protein]-peptidylproline (omega=180) = [protein]-peptidylproline (omega=0). Functionally, involved in protein export. Acts as a chaperone by maintaining the newly synthesized protein in an open conformation. Functions as a peptidyl-prolyl cis-trans isomerase. The sequence is that of Trigger factor from Prochlorococcus marinus (strain NATL2A).